Reading from the N-terminus, the 351-residue chain is MKSVLYSYILFLSCIIINGRDIAPHAPSNGKCKDNEYNRHNLCCLSCPPGTYASRLCDSKTNTNTQCTPCGSGTFTSRNNHLPACLSCNGRCDSNQVETRSCNTTHNRICECAPGYYCLLKGSSGCKACVSQTKCGIGYGVSGHTSTGDVVCSPCGLGTYSHTVSSADKCEPVPSNTFNYIDVEINLYPVNDTSCTRTTTTGLSESISTSELTITMNHKDCDPVFRDGYFSVLNKVATSGFFTGENRYQNISKVCTLNFEIKCNNKDSSSKQLTKTKNDDGIMPHSETVTLVGDCLSSVDIYILYSNTNTQDYETDTISYHVGNVLDVDSHMPGSCDIHKLITNSKPTRFL.

An N-terminal signal peptide occupies residues 1–19 (MKSVLYSYILFLSCIIING). TNFR-Cys repeat units lie at residues 31 to 67 (KCKD…NTQC) and 69 to 110 (PCGS…NRIC). Intrachain disulfides connect Cys32–Cys43, Cys44–Cys57, Cys47–Cys67, Cys70–Cys85, Cys88–Cys102, and Cys92–Cys110. Residues Asn103, Asn191, and Asn250 are each glycosylated (N-linked (GlcNAc...) asparagine; by host).

The protein belongs to the orthopoxvirus OPG002 family.

The protein resides in the secreted. Functionally, inhibits host immune defense by binding to host TNF and various chemokines in the extracellular space. Binds host CC chemokines (beta chemokines) and CXC chemokines (alpha chemokines). The protein is Soluble TNF receptor II (OPG002) of Bos taurus (Bovine).